The chain runs to 167 residues: 3-isopropylmalate dehydratase small subunit (167 aa).

It belongs to the LeuD family. LeuD type 2 subfamily. Heterodimer of LeuC and LeuD.

It carries out the reaction (2R,3S)-3-isopropylmalate = (2S)-2-isopropylmalate. The protein operates within amino-acid biosynthesis; L-leucine biosynthesis; L-leucine from 3-methyl-2-oxobutanoate: step 2/4. In terms of biological role, catalyzes the isomerization between 2-isopropylmalate and 3-isopropylmalate, via the formation of 2-isopropylmaleate. This chain is 3-isopropylmalate dehydratase small subunit, found in Wolinella succinogenes (strain ATCC 29543 / DSM 1740 / CCUG 13145 / JCM 31913 / LMG 7466 / NCTC 11488 / FDC 602W) (Vibrio succinogenes).